Consider the following 225-residue polypeptide: Chromosome partition protein MukE (225 aa).

Residues 197-225 form a disordered region; that stretch reads RDGEAMPIENHLQLNDETEESQPDSGEEE. Residues 212-225 show a composition bias toward acidic residues; sequence DETEESQPDSGEEE.

This sequence belongs to the MukE family. Interacts, and probably forms a ternary complex, with MukF and MukB. The complex formation is stimulated by calcium or magnesium.

The protein resides in the cytoplasm. The protein localises to the nucleoid. Its function is as follows. Involved in chromosome condensation, segregation and cell cycle progression. May participate in facilitating chromosome segregation by condensation DNA from both sides of a centrally located replisome during cell division. Probably acts via its interaction with MukB and MukF. The chain is Chromosome partition protein MukE from Salmonella typhi.